The sequence spans 77 residues: UPF0291 protein Bsph_1689 (77 aa).

The protein belongs to the UPF0291 family.

It is found in the cytoplasm. In Lysinibacillus sphaericus (strain C3-41), this protein is UPF0291 protein Bsph_1689.